Here is a 369-residue protein sequence, read N- to C-terminus: Protein V (369 aa).

2 disordered regions span residues 1 to 24 and 38 to 320; these read MDQDALISKEDSEVEREASGGRES and SEPT…GHRR. Basic and acidic residues predominate over residues 7 to 20; it reads ISKEDSEVEREASG. Positions 50 to 61 are enriched in polar residues; that stretch reads LHNTINTLQRPG. Composition is skewed to basic and acidic residues over residues 99–110 and 150–168; these read AEAHARNVDKQN and GAEDENREMAANPDKRGED. Phosphoserine; by host occurs at positions 249, 257, and 260. Residues His-318, Cys-337, Cys-341, Cys-353, Cys-355, Cys-358, Cys-362, and Cys-365 each coordinate Zn(2+).

Belongs to the paramyxoviruses V protein family. In terms of assembly, interacts with host IFIH1/MDA5 and DHX58/LGP2. Interacts with host IRF3. Interacts with host RIGI regulatory protein (via CARDs domain) and host TRIM25 (via SPRY domain); these interactions prevent TRIM25-mediated ubiquitination of RIG-I and disrupts downstream RIG-I signaling.

It is found in the host cytoplasm. Plays an essential role in the inhibition of host immune response. Prevents the establishment of cellular antiviral state by blocking interferon-alpha/beta (IFN-alpha/beta) production and signaling pathway. Interacts with host IFIH1/MDA5 and DHX58/LGP2 to inhibit the transduction pathway involved in the activation of IFN-beta promoter, thus protecting the virus against cell antiviral state. Also interacts with and inhibits host IRF3. Blocks the type I interferon signaling pathway by disrupting the RIG-I signaling pathway. This is Protein V (P/V/C) from Sendai virus (strain Hamamatsu) (SeV).